Reading from the N-terminus, the 212-residue chain is Redox-sensing transcriptional repressor Rex (212 aa).

The H-T-H motif DNA-binding region spans K17–F56. NAD(+) is bound at residue G91–G96.

This sequence belongs to the transcriptional regulatory Rex family. Homodimer.

The protein resides in the cytoplasm. In terms of biological role, modulates transcription in response to changes in cellular NADH/NAD(+) redox state. The sequence is that of Redox-sensing transcriptional repressor Rex from Clostridium perfringens (strain SM101 / Type A).